The following is a 180-amino-acid chain: uncharacterized protein (180 aa).

This sequence belongs to the CdaR family.

This is an uncharacterized protein from Thermomonospora curvata.